A 255-amino-acid polypeptide reads, in one-letter code: tRNA (guanine-N(1)-)-methyltransferase (255 aa).

S-adenosyl-L-methionine-binding positions include Gly117 and 137–142 (LGDFVL).

This sequence belongs to the RNA methyltransferase TrmD family. Homodimer.

It localises to the cytoplasm. The catalysed reaction is guanosine(37) in tRNA + S-adenosyl-L-methionine = N(1)-methylguanosine(37) in tRNA + S-adenosyl-L-homocysteine + H(+). Specifically methylates guanosine-37 in various tRNAs. This Paracidovorax citrulli (strain AAC00-1) (Acidovorax citrulli) protein is tRNA (guanine-N(1)-)-methyltransferase.